The following is a 360-amino-acid chain: Biotin synthase (360 aa).

The region spanning 83–315 is the Radical SAM core domain; it reads FCGKYFDLCT…KSFLRYCGGR (233 aa). 3 residues coordinate [4Fe-4S] cluster: C101, C105, and C108. Positions 145, 180, 240, and 310 each coordinate [2Fe-2S] cluster.

The protein belongs to the radical SAM superfamily. Biotin synthase family. Homodimer. [4Fe-4S] cluster serves as cofactor. [2Fe-2S] cluster is required as a cofactor.

The catalysed reaction is (4R,5S)-dethiobiotin + (sulfur carrier)-SH + 2 reduced [2Fe-2S]-[ferredoxin] + 2 S-adenosyl-L-methionine = (sulfur carrier)-H + biotin + 2 5'-deoxyadenosine + 2 L-methionine + 2 oxidized [2Fe-2S]-[ferredoxin]. It participates in cofactor biosynthesis; biotin biosynthesis; biotin from 7,8-diaminononanoate: step 2/2. Catalyzes the conversion of dethiobiotin (DTB) to biotin by the insertion of a sulfur atom into dethiobiotin via a radical-based mechanism. In Fusobacterium nucleatum subsp. nucleatum (strain ATCC 25586 / DSM 15643 / BCRC 10681 / CIP 101130 / JCM 8532 / KCTC 2640 / LMG 13131 / VPI 4355), this protein is Biotin synthase.